A 395-amino-acid polypeptide reads, in one-letter code: F-box/kelch-repeat protein SKIP25 (395 aa).

A disordered region spans residues 1 to 29 (MEKKLKRRESMSTTAAESPPAKRRRTVTG). The F-box domain maps to 34-79 (ALIEGLPDHISEICLSLVHRPSLLSAVCTRWRRLLYSPEFPSFPSL). 5 Kelch repeats span residues 81–129 (ALFV…YRHP), 147–194 (LILI…ACDG), 196–245 (IYIA…FSRE), 246–299 (AIDA…AMEE), and 301–342 (ILYS…TQVT).

Part of a SCF (ASK-cullin-F-box) protein ligase complex. Interacts with SKP1A/ASK1.

It localises to the nucleus. Its pathway is protein modification; protein ubiquitination. Functionally, component of SCF(ASK-cullin-F-box) E3 ubiquitin ligase complexes, which may mediate the ubiquitination and subsequent proteasomal degradation of target proteins. This chain is F-box/kelch-repeat protein SKIP25 (SKIP25), found in Arabidopsis thaliana (Mouse-ear cress).